Reading from the N-terminus, the 221-residue chain is PKHD-type hydroxylase A9601_13531 (221 aa).

The Fe2OG dioxygenase domain occupies 80 to 174 (LIHGIMFTKS…RIVCVGWIES (95 aa)). Fe cation is bound by residues His-98, Asp-100, and His-155. Residue Arg-165 participates in 2-oxoglutarate binding.

Fe(2+) serves as cofactor. L-ascorbate is required as a cofactor.

The chain is PKHD-type hydroxylase A9601_13531 from Prochlorococcus marinus (strain AS9601).